Consider the following 299-residue polypeptide: Probable lipid kinase YegS (299 aa).

One can recognise a DAGKc domain in the interval 2–133 (ANFPASLLIL…IDMARVNDKT (132 aa)). Residues Thr40, 66-72 (GDGTINE), and Thr95 each bind ATP. Residues Leu215, Asp218, and Leu220 each coordinate Mg(2+). The active-site Proton acceptor is Glu271.

The protein belongs to the diacylglycerol/lipid kinase family. YegS lipid kinase subfamily. Requires Mg(2+) as cofactor. It depends on Ca(2+) as a cofactor.

It localises to the cytoplasm. Functionally, probably phosphorylates lipids; the in vivo substrate is unknown. This Salmonella heidelberg (strain SL476) protein is Probable lipid kinase YegS.